We begin with the raw amino-acid sequence, 157 residues long: S-ribosylhomocysteine lyase (157 aa).

Fe cation is bound by residues His-54, His-58, and Cys-126.

This sequence belongs to the LuxS family. In terms of assembly, homodimer. Fe cation is required as a cofactor.

It catalyses the reaction S-(5-deoxy-D-ribos-5-yl)-L-homocysteine = (S)-4,5-dihydroxypentane-2,3-dione + L-homocysteine. Functionally, involved in the synthesis of autoinducer 2 (AI-2) which is secreted by bacteria and is used to communicate both the cell density and the metabolic potential of the environment. The regulation of gene expression in response to changes in cell density is called quorum sensing. Catalyzes the transformation of S-ribosylhomocysteine (RHC) to homocysteine (HC) and 4,5-dihydroxy-2,3-pentadione (DPD). The polypeptide is S-ribosylhomocysteine lyase (Bacillus velezensis (strain DSM 23117 / BGSC 10A6 / LMG 26770 / FZB42) (Bacillus amyloliquefaciens subsp. plantarum)).